The following is a 272-amino-acid chain: MLLLFTVVTLVSAAQVAPVTPQAAVPTQFLPGAQQKIGGVDNRCANKQVEGVQIFQGDMADCPKRNSEAANAMVQRAKQKALEIYNKEISKGPTPKDSGQCIERAVQGTDRCILAKIIDKAVNMLKYRISKVGNATALFRGNKLISLILNVDYGLKPFFTVVKKKTKRVFPQGDELNFNGIGQLIGVKGTFPQDNNDECKPCDSPKKTVETVAEECNLGCQLKGTPGLISRAIQKKEVKESSKDGEKSSTQNGEGTTDDEDGQQSPDGNGPE.

A signal peptide spans 1–21; it reads MLLLFTVVTLVSAAQVAPVTP. The N-linked (GlcNAc...) asparagine glycan is linked to asparagine 134. Positions 231-272 are disordered; the sequence is RAIQKKEVKESSKDGEKSSTQNGEGTTDDEDGQQSPDGNGPE. Basic and acidic residues predominate over residues 234 to 247; sequence QKKEVKESSKDGEK. Residues 263–272 are compositionally biased toward polar residues; sequence QQSPDGNGPE.

The protein localises to the spore polar tube. Involved in formation of a polar tube through which the infectious agent is passed on to the host cell. The chain is Polar tube protein 2 (PTP2) from Encephalitozoon hellem (Microsporidian parasite).